The sequence spans 195 residues: Imidazoleglycerol-phosphate dehydratase (195 aa).

This sequence belongs to the imidazoleglycerol-phosphate dehydratase family.

It localises to the cytoplasm. It carries out the reaction D-erythro-1-(imidazol-4-yl)glycerol 3-phosphate = 3-(imidazol-4-yl)-2-oxopropyl phosphate + H2O. Its pathway is amino-acid biosynthesis; L-histidine biosynthesis; L-histidine from 5-phospho-alpha-D-ribose 1-diphosphate: step 6/9. In Geobacillus sp. (strain WCH70), this protein is Imidazoleglycerol-phosphate dehydratase.